Consider the following 824-residue polypeptide: Acyl-homoserine lactone acylase QuiP (824 aa).

The first 26 residues, 1-26, serve as a signal peptide directing secretion; that stretch reads MASPALRHFLPRFGAAAAAASFLSLA. Catalysis depends on S264, which acts as the Nucleophile.

Belongs to the peptidase S45 family. Heterodimer of an alpha subunit and a beta subunit processed from the same precursor.

The protein localises to the periplasm. It carries out the reaction an N-acyl-L-homoserine lactone + H2O = L-homoserine lactone + a carboxylate. Its function is as follows. Catalyzes the deacylation of acyl-homoserine lactone (AHL or acyl-HSL), releasing homoserine lactone (HSL) and the corresponding fatty acid. Possesses a specificity for the degradation of long-chain acyl-HSLs (side chains of seven or more carbons in length). The chain is Acyl-homoserine lactone acylase QuiP (quiP) from Pseudomonas syringae pv. tomato (strain ATCC BAA-871 / DC3000).